Consider the following 413-residue polypeptide: Phosphoglycerate kinase (413 aa).

Substrate contacts are provided by residues 19 to 21, R34, 57 to 60, R114, and R154; these read DLN and HQSK. Residues E332 and 358–361 each bind ATP; that span reads GGHS.

This sequence belongs to the phosphoglycerate kinase family. In terms of assembly, monomer.

It is found in the cytoplasm. The enzyme catalyses (2R)-3-phosphoglycerate + ATP = (2R)-3-phospho-glyceroyl phosphate + ADP. The protein operates within carbohydrate degradation; glycolysis; pyruvate from D-glyceraldehyde 3-phosphate: step 2/5. This is Phosphoglycerate kinase from Thermococcus sibiricus (strain DSM 12597 / MM 739).